Here is a 323-residue protein sequence, read N- to C-terminus: tRNA U34 carboxymethyltransferase (323 aa).

Carboxy-S-adenosyl-L-methionine-binding positions include lysine 91, tryptophan 105, lysine 110, glycine 130, 152-154, 181-182, methionine 196, tyrosine 200, and arginine 315; these read DPT and IE.

It belongs to the class I-like SAM-binding methyltransferase superfamily. CmoB family. Homotetramer.

It catalyses the reaction carboxy-S-adenosyl-L-methionine + 5-hydroxyuridine(34) in tRNA = 5-carboxymethoxyuridine(34) in tRNA + S-adenosyl-L-homocysteine + H(+). Functionally, catalyzes carboxymethyl transfer from carboxy-S-adenosyl-L-methionine (Cx-SAM) to 5-hydroxyuridine (ho5U) to form 5-carboxymethoxyuridine (cmo5U) at position 34 in tRNAs. This is tRNA U34 carboxymethyltransferase from Salmonella paratyphi B (strain ATCC BAA-1250 / SPB7).